A 985-amino-acid chain; its full sequence is Exocyst complex component 4 (985 aa).

The stretch at 36–70 forms a coiled coil; sequence SETTEERQKEKQKIEAEFKRSDLRLNELVSRHDQQ. Residues Ser235, Ser456, Ser459, Ser682, and Ser686 each carry the phosphoserine modification. The tract at residues 434–480 is disordered; it reads DKSSHVGTSNNSDAFKEHRRNASDASVDDNLAGQLGGSGKGSTSGLF.

Belongs to the SEC8 family. As to quaternary structure, the exocyst complex is composed of Sec3/Exoc1, Sec5/Exoc2, Sec6/Exoc3, Sec8/Exoc4, Sec10/Exoc5, Sec15/Exoc6, exo70/Exoc7 and Exo84/Exoc8. In terms of tissue distribution, abundant in the embryonic and larval glutamatergic neuromuscular junctions (NMJs), pre and postsynaptically.

In terms of biological role, component of the exocyst complex involved in the docking of exocytic vesicles with fusion sites on the plasma membrane. Involved in regulation of synaptic microtubule formation, and also regulation of synaptic growth and glutamate receptor trafficking. Does not appear to be required for basal neurotransmission. The protein is Exocyst complex component 4 of Drosophila melanogaster (Fruit fly).